The following is a 162-amino-acid chain: uncharacterized protein (162 aa).

The chain crosses the membrane as a helical span at residues S6–F24.

It localises to the membrane. This is an uncharacterized protein from Caenorhabditis elegans.